The following is a 565-amino-acid chain: Sulfite reductase [NADPH] hemoprotein beta-component (565 aa).

Cys429, Cys435, Cys474, and Cys478 together coordinate [4Fe-4S] cluster. Cys478 contacts siroheme.

The protein belongs to the nitrite and sulfite reductase 4Fe-4S domain family. Alpha(8)-beta(8). The alpha component is a flavoprotein, the beta component is a hemoprotein. Requires siroheme as cofactor. [4Fe-4S] cluster serves as cofactor.

It catalyses the reaction hydrogen sulfide + 3 NADP(+) + 3 H2O = sulfite + 3 NADPH + 4 H(+). It participates in sulfur metabolism; hydrogen sulfide biosynthesis; hydrogen sulfide from sulfite (NADPH route): step 1/1. In terms of biological role, component of the sulfite reductase complex that catalyzes the 6-electron reduction of sulfite to sulfide. This is one of several activities required for the biosynthesis of L-cysteine from sulfate. The polypeptide is Sulfite reductase [NADPH] hemoprotein beta-component (Shewanella halifaxensis (strain HAW-EB4)).